The following is a 149-amino-acid chain: Ribosome-binding factor A (149 aa).

A compositionally biased stretch (basic and acidic residues) spans Thr116–Pro125. A disordered region spans residues Thr116–Thr149. Residues Glu126–Ser143 show a composition bias toward acidic residues.

This sequence belongs to the RbfA family. As to quaternary structure, monomer. Binds 30S ribosomal subunits, but not 50S ribosomal subunits or 70S ribosomes.

It is found in the cytoplasm. In terms of biological role, one of several proteins that assist in the late maturation steps of the functional core of the 30S ribosomal subunit. Associates with free 30S ribosomal subunits (but not with 30S subunits that are part of 70S ribosomes or polysomes). Required for efficient processing of 16S rRNA. May interact with the 5'-terminal helix region of 16S rRNA. This Leptospira biflexa serovar Patoc (strain Patoc 1 / Ames) protein is Ribosome-binding factor A.